The sequence spans 211 residues: Claudin-7 (211 aa).

At 1–7 (MANSGLQ) the chain is on the cytoplasmic side. The helical transmembrane segment at 8–28 (LLGFSMAMLGWVGLIASTAIP) threads the bilayer. Residues 29–81 (QWQMSSYAGDNIITAQAMYKGLWMECVTQSTGMMSCKMYDSVLALPGALQATR) lie on the Extracellular side of the membrane. The chain crosses the membrane as a helical span at residues 82–102 (ALMVVSLVLGFLAMFVATMGM). Over 103-119 (KCTRCGGDDKAKKARIA) the chain is Cytoplasmic. A helical transmembrane segment spans residues 120 to 140 (MTGGIVFIVAGLAALVACSWI). The Extracellular portion of the chain corresponds to 141–160 (GHQIVTDFYNPLTPMNVKYE). The helical transmembrane segment at 161–181 (FGPAIFIGWAGSALVLLGGAL) threads the bilayer. Over 182 to 211 (LSCSCPGSESKAAYRAPRSYPKSNSSKEYV) the chain is Cytoplasmic. The interval 210-211 (YV) is interactions with TJP1, TJP2 and TJP3.

This sequence belongs to the claudin family. In terms of assembly, directly interacts with TJP1/ZO-1, TJP2/ZO-2 and TJP3/ZO-3. The phosphorylated form interacts with EPCAM. Post-translationally, phosphorylated. Expressed predominantly in lung and kidney.

It localises to the cell membrane. The protein resides in the basolateral cell membrane. It is found in the cell junction. Its subcellular location is the tight junction. Functionally, plays a major role in tight junction-specific obliteration of the intercellular space, through calcium-independent cell-adhesion activity. In Mus musculus (Mouse), this protein is Claudin-7 (Cldn7).